The primary structure comprises 165 residues: NADH-quinone oxidoreductase subunit I (165 aa).

4Fe-4S ferredoxin-type domains follow at residues Arg-57–Glu-86 and Ser-96–Ile-125. 8 residues coordinate [4Fe-4S] cluster: Cys-66, Cys-69, Cys-72, Cys-76, Cys-105, Cys-108, Cys-111, and Cys-115.

Belongs to the complex I 23 kDa subunit family. NDH-1 is composed of 14 different subunits. Subunits NuoA, H, J, K, L, M, N constitute the membrane sector of the complex. [4Fe-4S] cluster is required as a cofactor.

It is found in the cell inner membrane. The enzyme catalyses a quinone + NADH + 5 H(+)(in) = a quinol + NAD(+) + 4 H(+)(out). NDH-1 shuttles electrons from NADH, via FMN and iron-sulfur (Fe-S) centers, to quinones in the respiratory chain. The immediate electron acceptor for the enzyme in this species is believed to be ubiquinone. Couples the redox reaction to proton translocation (for every two electrons transferred, four hydrogen ions are translocated across the cytoplasmic membrane), and thus conserves the redox energy in a proton gradient. In Polaromonas sp. (strain JS666 / ATCC BAA-500), this protein is NADH-quinone oxidoreductase subunit I.